A 306-amino-acid polypeptide reads, in one-letter code: Protein SEC13 homolog (306 aa).

6 WD repeats span residues 11-50 (QHRDAIHDAQLNIYGNRLATCGSDRLVKIFEVRPNGQSYP), 56-97 (GHNG…WQKT), 102-143 (THEA…QQWQ), 150-195 (CHDQ…NEWT), 202-245 (CHKD…TAEW), and 252-291 (QAPCALYHASFSPCGSFLSVSGDDNMITLWRENLQGQWIK).

This sequence belongs to the WD repeat SEC13 family. As to quaternary structure, probably part of the GATOR complex.

The protein resides in the cytoplasmic vesicle. It is found in the COPII-coated vesicle membrane. It localises to the endoplasmic reticulum membrane. Its subcellular location is the nucleus. The protein localises to the nuclear pore complex. The protein resides in the lysosome membrane. Functionally, functions as a component of the nuclear pore complex (NPC) and the COPII coat. Its function is as follows. As a component of the GATOR complex may function in the amino acid-sensing branch of the TORC1 signaling pathway. The polypeptide is Protein SEC13 homolog (Caenorhabditis briggsae).